Reading from the N-terminus, the 268-residue chain is MEMO1 family protein Ta0237 (268 aa).

This sequence belongs to the MEMO1 family.

This Thermoplasma acidophilum (strain ATCC 25905 / DSM 1728 / JCM 9062 / NBRC 15155 / AMRC-C165) protein is MEMO1 family protein Ta0237.